Reading from the N-terminus, the 306-residue chain is Methionyl-tRNA formyltransferase (306 aa).

110-113 provides a ligand contact to (6S)-5,6,7,8-tetrahydrofolate; the sequence is SLLP.

This sequence belongs to the Fmt family.

The enzyme catalyses L-methionyl-tRNA(fMet) + (6R)-10-formyltetrahydrofolate = N-formyl-L-methionyl-tRNA(fMet) + (6S)-5,6,7,8-tetrahydrofolate + H(+). Attaches a formyl group to the free amino group of methionyl-tRNA(fMet). The formyl group appears to play a dual role in the initiator identity of N-formylmethionyl-tRNA by promoting its recognition by IF2 and preventing the misappropriation of this tRNA by the elongation apparatus. The polypeptide is Methionyl-tRNA formyltransferase (Brucella abortus (strain S19)).